A 70-amino-acid polypeptide reads, in one-letter code: Large ribosomal subunit protein bL31 (70 aa).

Zn(2+)-binding residues include Cys16, Cys18, Cys38, and Cys41.

It belongs to the bacterial ribosomal protein bL31 family. Type A subfamily. In terms of assembly, part of the 50S ribosomal subunit. The cofactor is Zn(2+).

Functionally, binds the 23S rRNA. The protein is Large ribosomal subunit protein bL31 of Vesicomyosocius okutanii subsp. Calyptogena okutanii (strain HA).